The primary structure comprises 333 residues: Probable tRNA pseudouridine synthase B (333 aa).

The segment covering 1-14 (MKCPSREVFSKFEE) has biased composition (basic and acidic residues). Residues 1–27 (MKCPSREVFSKFEESTNPQWGKPPSQR) are disordered. Asp-71 (nucleophile) is an active-site residue. In terms of domain architecture, PUA spans 238–313 (LPKIWVRDSA…LVARTDRVVM (76 aa)).

Belongs to the pseudouridine synthase TruB family. Type 2 subfamily.

The enzyme catalyses uridine(55) in tRNA = pseudouridine(55) in tRNA. Functionally, could be responsible for synthesis of pseudouridine from uracil-55 in the psi GC loop of transfer RNAs. The sequence is that of Probable tRNA pseudouridine synthase B from Pyrobaculum aerophilum (strain ATCC 51768 / DSM 7523 / JCM 9630 / CIP 104966 / NBRC 100827 / IM2).